We begin with the raw amino-acid sequence, 225 residues long: Thaumatin-like protein (225 aa).

Residues 1 to 24 (MSTFKSLSLSALLFIAFLFTCARG) form the signal peptide. 8 disulfides stabilise this stretch: Cys33/Cys224, Cys74/Cys84, Cys89/Cys95, Cys140/Cys213, Cys146/Cys196, Cys154/Cys164, Cys168/Cys177, and Cys178/Cys183.

Belongs to the thaumatin family. N-glycosylated.

The protein localises to the secreted. Functionally, has antifungal activity against B.cinerea, C.comatus, M.arachidicola, P.piricola, C.albicans and S.carlsbergensis. Inhibits HIV-1 reverse transcriptase. This Actinidia chinensis var. chinensis (Chinese soft-hair kiwi) protein is Thaumatin-like protein.